Here is a 680-residue protein sequence, read N- to C-terminus: WD repeat-containing protein 48 homolog (680 aa).

WD repeat units lie at residues 26 to 65 (QHRN…SEKY), 71 to 110 (HHND…CMST), 113 to 152 (THRD…ALTA), 164 to 203 (GSKD…RSMK), 206 to 245 (GHTE…CVQT), 248 to 287 (VHKE…NKTL), 290 to 329 (EEQA…RCTM), and 350 to 389 (KGGA…KKEQ). The tract at residues 592 to 616 (ETTPSGGNANNSLQNSQSDANSEGS) is disordered.

Belongs to the WD repeat WDR48 family. In terms of assembly, catalytic component of the Usp12-46 deubiquitylase complex consisting of Usp12-46, Wdr20 and Uaf1; regulatory subunit that, together wtih Wdr20, stabilizes Usp12-46. The Usp12-46 deubiquitylase complex associates with arr/arrow; the interaction leads to deubiquitination and stabilization of arr/arrow.

Its function is as follows. Regulatory component of the Usp12-46 deubiquitylase complex. activates deubiquitination by increasing the catalytic turnover without increasing the affinity of deubiquitinating enzymes for the substrate. The complex deubiquitylates the wg/wingless-signaling receptor arr/arrow, which stabilizes the receptor and increases its concentration at the cell surface; this enhances the sensitivity of cells to wg/wingless-signal stimulation. This increases the amplitude and spatial range of the signaling response to the wg/wingless morphogen gradient, facilitating the precise concentration-dependent regulation of its target genes. Together with Wdr20 and Usp12-46 required for wg/wingless-mediated signaling in the wing imaginal disc and for wg/wingless-dependent regulation of intestinal stem cell proliferation. The sequence is that of WD repeat-containing protein 48 homolog from Drosophila yakuba (Fruit fly).